The primary structure comprises 194 residues: MQQLILASSSPRRQELLRQVGIPFVVAVPEVDEHAVHADSPAELVERLALRKARAVSVRYPGAIVLGADTIVVVDGEVLGKPADRAEAEWMLGRLSGRSHQVLTGVALVRGDEELVAHEETVVRFAPLSREQIQWYVETGEPMDKAGAYGIQGRAAALIASISGDYYNVVGLPLHRTVQMLTQFGYPIFTGGAG.

Asp-69 functions as the Proton acceptor in the catalytic mechanism.

The protein belongs to the Maf family. YhdE subfamily. A divalent metal cation serves as cofactor.

The protein localises to the cytoplasm. The catalysed reaction is dTTP + H2O = dTMP + diphosphate + H(+). The enzyme catalyses UTP + H2O = UMP + diphosphate + H(+). In terms of biological role, nucleoside triphosphate pyrophosphatase that hydrolyzes dTTP and UTP. May have a dual role in cell division arrest and in preventing the incorporation of modified nucleotides into cellular nucleic acids. This chain is dTTP/UTP pyrophosphatase, found in Symbiobacterium thermophilum (strain DSM 24528 / JCM 14929 / IAM 14863 / T).